A 995-amino-acid chain; its full sequence is Aconitate hydratase 2, mitochondrial (995 aa).

A mitochondrion-targeting transit peptide spans 1-83 (MYRRATSGVR…PASLRAQARN (83 aa)). Substrate-binding positions include Gln187 and 306-308 (DSH). Residues Cys538, Cys604, and Cys607 each coordinate [4Fe-4S] cluster. Substrate contacts are provided by residues Arg637, Arg642, Arg800, and 881–882 (SR).

Belongs to the aconitase/IPM isomerase family. In terms of assembly, monomer. Requires [4Fe-4S] cluster as cofactor. In terms of tissue distribution, mostly expressed in roots, leaves and flowers, also present in stems, and, at low levels, in seeds.

The protein resides in the mitochondrion. It catalyses the reaction citrate = D-threo-isocitrate. It functions in the pathway carbohydrate metabolism; tricarboxylic acid cycle; isocitrate from oxaloacetate: step 2/2. Catalyzes the isomerization of citrate to isocitrate via cis-aconitate. Contributes to oxidative stress tolerance. Involved in acetate assimilation. The sequence is that of Aconitate hydratase 2, mitochondrial from Arabidopsis thaliana (Mouse-ear cress).